Consider the following 153-residue polypeptide: Salivary C-type lectin 1 (153 aa).

The first 19 residues, 1 to 19 (MIFSLYLIVAISLADLTAA), serve as a signal peptide directing secretion. A C-type lectin domain is found at 26–151 (KNRFCFPNVV…CSSTRRFVCE (126 aa)). Disulfide bonds link C45–C150 and C122–C142.

Requires Ca(2+) as cofactor. In terms of tissue distribution, expressed in female salivary gland. Not detected or low-level expression in female midgut and fat body.

The protein resides in the secreted. Functionally, salivary protein with carbohydrate-binding activity; exibits high affinity for D-mannose. Agglutinates host erythrocytes. Probably participates in mosquito innate immune responses to prevent microorganism multiplication in sugar and blood meals. Its function is as follows. (Microbial infection) Agglutinates Staphylococcus aureus in vitro. (Microbial infection) Agglutinates Candida albicans in vitro. In terms of biological role, (Microbial infection) Does not agglutinate Escherichia coli in vitro. The sequence is that of Salivary C-type lectin 1 from Aedes albopictus (Asian tiger mosquito).